The primary structure comprises 123 residues: MPTIEQLVRKGRQAKPKKSKTLALKGSPLRRGVCTRVYTTTPKKPNSALRKVARVRLSSGVEVTAYIPGEGHNLQEHSIVLVRGGRVKDLPGVRYHIVRGALDTQGVKDRKQGRSLYGAKKAK.

The tract at residues 1 to 21 (MPTIEQLVRKGRQAKPKKSKT) is disordered. Basic residues predominate over residues 9 to 20 (RKGRQAKPKKSK). Aspartate 89 is modified (3-methylthioaspartic acid).

Belongs to the universal ribosomal protein uS12 family. Part of the 30S ribosomal subunit. Contacts proteins S8 and S17. May interact with IF1 in the 30S initiation complex.

In terms of biological role, with S4 and S5 plays an important role in translational accuracy. Functionally, interacts with and stabilizes bases of the 16S rRNA that are involved in tRNA selection in the A site and with the mRNA backbone. Located at the interface of the 30S and 50S subunits, it traverses the body of the 30S subunit contacting proteins on the other side and probably holding the rRNA structure together. The combined cluster of proteins S8, S12 and S17 appears to hold together the shoulder and platform of the 30S subunit. This Bifidobacterium adolescentis (strain ATCC 15703 / DSM 20083 / NCTC 11814 / E194a) protein is Small ribosomal subunit protein uS12.